Consider the following 317-residue polypeptide: ADP-L-glycero-D-manno-heptose-6-epimerase (317 aa).

NADP(+) contacts are provided by residues 10–11 (FI), 31–32 (DD), K38, K53, 76–80 (QGACS), and N93. Residue Y140 is the Proton acceptor of the active site. K144 contacts NADP(+). N169 serves as a coordination point for substrate. Positions 170 and 178 each coordinate NADP(+). K178 serves as the catalytic Proton acceptor. Substrate-binding positions include A180, H187, 201-204 (FEGC), R214, and Y278.

Belongs to the NAD(P)-dependent epimerase/dehydratase family. HldD subfamily. In terms of assembly, homopentamer. Requires NADP(+) as cofactor.

The catalysed reaction is ADP-D-glycero-beta-D-manno-heptose = ADP-L-glycero-beta-D-manno-heptose. The protein operates within nucleotide-sugar biosynthesis; ADP-L-glycero-beta-D-manno-heptose biosynthesis; ADP-L-glycero-beta-D-manno-heptose from D-glycero-beta-D-manno-heptose 7-phosphate: step 4/4. Catalyzes the interconversion between ADP-D-glycero-beta-D-manno-heptose and ADP-L-glycero-beta-D-manno-heptose via an epimerization at carbon 6 of the heptose. The polypeptide is ADP-L-glycero-D-manno-heptose-6-epimerase (Nitrosococcus oceani (strain ATCC 19707 / BCRC 17464 / JCM 30415 / NCIMB 11848 / C-107)).